The sequence spans 255 residues: Protein DOG1-like 2 (255 aa).

A DOG1 domain is found at 10–246 (EKLQKRCYHE…HDRGRVRADV (237 aa)).

This chain is Protein DOG1-like 2, found in Arabidopsis thaliana (Mouse-ear cress).